We begin with the raw amino-acid sequence, 370 residues long: Glucan endo-1,3-beta-glucosidase, basic vacuolar isoform GLB (370 aa).

An N-terminal signal peptide occupies residues 1–32 (MSTSDKHNTPQMAAITLLGLLLVASTIEIAGA). Residue Gln-33 is modified to Pyrrolidone carboxylic acid. The active-site Proton donor is the Glu-128. The active-site Nucleophile is the Glu-273. The propeptide at 349–370 (VSGGVWDSSVETNATASLISEM) is removed in mature form. The N-linked (GlcNAc...) asparagine glycan is linked to Asn-361.

This sequence belongs to the glycosyl hydrolase 17 family. As to expression, is expressed primarily in epidermal cell of healthy plant, and following induction by ethylene, accumulates in mesophyll cells.

Its subcellular location is the vacuole. It catalyses the reaction Hydrolysis of (1-&gt;3)-beta-D-glucosidic linkages in (1-&gt;3)-beta-D-glucans.. In terms of biological role, implicated in the defense of plants against pathogens. This Nicotiana tabacum (Common tobacco) protein is Glucan endo-1,3-beta-glucosidase, basic vacuolar isoform GLB.